A 369-amino-acid polypeptide reads, in one-letter code: Cobalt-precorrin-5B C(1)-methyltransferase (369 aa).

It belongs to the CbiD family.

The enzyme catalyses Co-precorrin-5B + S-adenosyl-L-methionine = Co-precorrin-6A + S-adenosyl-L-homocysteine. It functions in the pathway cofactor biosynthesis; adenosylcobalamin biosynthesis; cob(II)yrinate a,c-diamide from sirohydrochlorin (anaerobic route): step 6/10. In terms of biological role, catalyzes the methylation of C-1 in cobalt-precorrin-5B to form cobalt-precorrin-6A. The protein is Cobalt-precorrin-5B C(1)-methyltransferase of Prosthecochloris aestuarii (strain DSM 271 / SK 413).